Here is a 93-residue protein sequence, read N- to C-terminus: Small ribosomal subunit protein uS19 (93 aa).

The protein belongs to the universal ribosomal protein uS19 family.

In terms of biological role, protein S19 forms a complex with S13 that binds strongly to the 16S ribosomal RNA. This Leptospira interrogans serogroup Icterohaemorrhagiae serovar copenhageni (strain Fiocruz L1-130) protein is Small ribosomal subunit protein uS19.